The chain runs to 591 residues: MMRSHYCGALNRSHVGQTVTLSGWVHRVRNLGRFIFMQIRDREGIVQVFFDEKDEAIFKIASSLRSEACVQIQGEVIARDESQINKEMATGEIEVLVKNVVVYNNADVLPLDFNQNNTEEQRLKYRYLDLRRPEMAEKLKTRAKITSFVRRYMDDNGFLDIETPMLTKATPEGARDYLVPSRVHNGKFYALPQSPQLFKQLLMMSGFDRYYQIVKCFRDEDLRADRQPEFTQIDVETSFLTAEEVRELMENMIHGLWLDRLNVDLGKFPIMTWQEAMQRFGSDKPDLRNPLELVDVADILKDVEFKVFNEPANSADGRVTVLRVPNGASLTRKQIDEYTQFVGIYGAKGLAWAKINNVNAGMEGIQSPVAKFLNEEVFKALIERTNATSGDILFFGADKWQVVTDSMGALRLKVGRDLALTDLSAWKPLWVIDFPMFEKDDEGNLSAMHHPFTSPKNLTPEELAANPVNAVANAYDMVINGYEVGGGSVRIYDPKMQQTVFGILGINEQDQQEKFGFLLDALKFGTPPHAGLAFGLDRLTMLITGTENIRDVIAFPKTTAAACLMTEAPSFANPQALEELGIAVLKKEKAE.

L-aspartate is bound at residue glutamate 172. The interval 196-199 (QLFK) is aspartate. Arginine 218 lines the L-aspartate pocket. ATP is bound by residues 218 to 220 (RDE) and glutamine 227. L-aspartate is bound at residue histidine 449. Glutamate 483 serves as a coordination point for ATP. Arginine 490 provides a ligand contact to L-aspartate. An ATP-binding site is contributed by 535–538 (GLDR).

The protein belongs to the class-II aminoacyl-tRNA synthetase family. Type 1 subfamily. As to quaternary structure, homodimer.

It localises to the cytoplasm. The enzyme catalyses tRNA(Asp) + L-aspartate + ATP = L-aspartyl-tRNA(Asp) + AMP + diphosphate. In terms of biological role, catalyzes the attachment of L-aspartate to tRNA(Asp) in a two-step reaction: L-aspartate is first activated by ATP to form Asp-AMP and then transferred to the acceptor end of tRNA(Asp). In Actinobacillus pleuropneumoniae serotype 5b (strain L20), this protein is Aspartate--tRNA ligase.